The following is a 414-amino-acid chain: Cytosolic-abundant heat soluble protein 89226 (414 aa).

2 stretches are compositionally biased toward basic and acidic residues: residues 27 to 45 (IGEDRGKEDPGMNFQDKRP) and 69 to 84 (AGQRLREHLSESERLR). Positions 27 to 155 (IGEDRGKEDP…SNPGMNNGMT (129 aa)) are disordered. Composition is skewed to low complexity over residues 86 to 101 (SRSSTSSKSSSFVEPS) and 120 to 134 (SSNRQNSSSNVSSSD). Polar residues predominate over residues 142–155 (ASRNSNPGMNNGMT). 2 CAHS motif regions span residues 305-323 (YRNAVEADAELIRQTLERQ) and 342-360 (QQQEIRLEAEYAMRALEQE). Positions 341–376 (RQQQEIRLEAEYAMRALEQERVNARAALDQAMASTN) form a coiled coil. Polar residues predominate over residues 388-405 (THSQGRVTTTSESRTSQA). The disordered stretch occupies residues 388-414 (THSQGRVTTTSESRTSQARGPATAAVI).

This sequence belongs to the Cytosolic-abundant heat soluble protein (CAHS) family.

The protein resides in the cytoplasm. Its function is as follows. CAHS proteins are cytosolic heat soluble proteins that seem to contribute to the anhydrobiosis in tardigrades, but their specific mechanisms are yet to be identified. It is possible that protection during anhydrobiosis might occur via the stabilization of vitrifying small molecules such as sugars, but not via the direct glass transition of CAHS proteins themselves. The polypeptide is Cytosolic-abundant heat soluble protein 89226 (Hypsibius exemplaris (Freshwater tardigrade)).